Reading from the N-terminus, the 220-residue chain is dTTP/UTP pyrophosphatase (220 aa).

Aspartate 83 (proton acceptor) is an active-site residue.

This sequence belongs to the Maf family. YhdE subfamily. It depends on a divalent metal cation as a cofactor.

It localises to the cytoplasm. The enzyme catalyses dTTP + H2O = dTMP + diphosphate + H(+). It carries out the reaction UTP + H2O = UMP + diphosphate + H(+). Its function is as follows. Nucleoside triphosphate pyrophosphatase that hydrolyzes dTTP and UTP. May have a dual role in cell division arrest and in preventing the incorporation of modified nucleotides into cellular nucleic acids. This chain is dTTP/UTP pyrophosphatase, found in Syntrophotalea carbinolica (strain DSM 2380 / NBRC 103641 / GraBd1) (Pelobacter carbinolicus).